The following is a 66-amino-acid chain: Large ribosomal subunit protein bL35 (66 aa).

The protein belongs to the bacterial ribosomal protein bL35 family.

The protein is Large ribosomal subunit protein bL35 of Azorhizobium caulinodans (strain ATCC 43989 / DSM 5975 / JCM 20966 / LMG 6465 / NBRC 14845 / NCIMB 13405 / ORS 571).